We begin with the raw amino-acid sequence, 462 residues long: UDP-N-acetylmuramate--L-alanine ligase (462 aa).

ATP is bound at residue 119 to 125 (GTHGKTT).

Belongs to the MurCDEF family.

Its subcellular location is the cytoplasm. The enzyme catalyses UDP-N-acetyl-alpha-D-muramate + L-alanine + ATP = UDP-N-acetyl-alpha-D-muramoyl-L-alanine + ADP + phosphate + H(+). It functions in the pathway cell wall biogenesis; peptidoglycan biosynthesis. Cell wall formation. The protein is UDP-N-acetylmuramate--L-alanine ligase of Parabacteroides distasonis (strain ATCC 8503 / DSM 20701 / CIP 104284 / JCM 5825 / NCTC 11152).